A 295-amino-acid polypeptide reads, in one-letter code: Caffeine dehydrogenase subunit beta (295 aa).

In terms of domain architecture, FAD-binding PCMH-type spans 1–178 (MKPTAFDYIR…CEIRIPVPSQ (178 aa)). FAD is bound by residues 32 to 36 (AGGQS) and 111 to 115 (TLGGN).

Heterotrimer composed of an alpha (CdhA), a beta (CdhB) and a gamma (CdhC) subunit.

It carries out the reaction caffeine + a ubiquinone + H2O = 1,3,7-trimethylurate + a ubiquinol. It catalyses the reaction ubiquinone-0 + caffeine + H2O = ubiquinol-0 + 1,3,7-trimethylurate. The enzyme catalyses theobromine + a ubiquinone + H2O = 3,7-dimethylurate + a ubiquinol. Functionally, component of the caffeine dehydrogenase complex that catalyzes the hydrolytical oxidation of 1,3,7-trimethylxanthine (caffeine) by incorporation of an oxygen atom originating from a water molecule into position C-8 to produce 1,3,7-trimethyluric acid (TMU). Coenzyme Q0 (ubiquinone-0) is the preferred electron acceptor and, to a lesser extent, coenzyme Q2 (ubiquinone-2) can also be used, but oxygen and NAD(P)(+) cannot. Is involved in a caffeine degradation pathway that allows Pseudomonas sp. strain CBB1 to grow on caffeine as the sole carbon and nitrogen source. Is also active with theobromine as substrate, but shows a very poor activity with theophylline and is not active with xanthine, 3-methylxanthine, 7-methylxanthine, TMU, and 3,7-dimethylurate. This is Caffeine dehydrogenase subunit beta from Pseudomonas sp. (strain CBB1).